Reading from the N-terminus, the 573-residue chain is N(2)-(2-carboxyethyl)arginine synthase (573 aa).

Substrate contacts are provided by Tyr271 and Asp301. 410–413 serves as a coordination point for thiamine diphosphate; the sequence is IGFF. 414 to 415 is a substrate binding site; the sequence is RH. 436 to 438 contacts thiamine diphosphate; that stretch reads SSF. Mg(2+) is bound at residue Asp463. Residues 464-465, 490-495, and Tyr561 contribute to the thiamine diphosphate site; these read GG and NDTNGL. Mg(2+) is bound by residues Asn490 and Thr492. Leu571 serves as a coordination point for substrate.

In terms of assembly, homotetramer; dimer of dimers. Requires Mg(2+) as cofactor. The cofactor is thiamine diphosphate.

The enzyme catalyses D-glyceraldehyde 3-phosphate + L-arginine = N(2)-(2-carboxyethyl)-L-arginine + phosphate + H(+). Its function is as follows. Involved in the biosynthesis of the beta-lactamase inhibitor, clavulanic acid. Catalyzes the thiamine diphosphate (ThDP) dependent condensation of D-glyceraldehyde-3-phosphate (D-G3P) with L-arginine to yield the beta-amino acid, N2-(2-carboxyethyl)arginine (CEA) via a beta-elimination resulting in the formation of an enol which undergoes a second elimination to generate the alpha,beta-unsaturated acryloyl-ThDP. The chain is N(2)-(2-carboxyethyl)arginine synthase from Streptomyces clavuligerus.